Here is a 101-residue protein sequence, read N- to C-terminus: Small ribosomal subunit protein uS14 (101 aa).

The segment at 1 to 21 (MAKTSAVEKNKRRRKSVAQQA) is disordered.

The protein belongs to the universal ribosomal protein uS14 family. As to quaternary structure, part of the 30S ribosomal subunit. Contacts proteins S3 and S10.

Its function is as follows. Binds 16S rRNA, required for the assembly of 30S particles and may also be responsible for determining the conformation of the 16S rRNA at the A site. This chain is Small ribosomal subunit protein uS14, found in Agrobacterium fabrum (strain C58 / ATCC 33970) (Agrobacterium tumefaciens (strain C58)).